The primary structure comprises 196 residues: Carnitine operon protein CaiE (196 aa).

Residues 173-196 (TQPLRQMEENRPRLQGTTDVTPKR) form a disordered region. The span at 187 to 196 (QGTTDVTPKR) shows a compositional bias: polar residues.

This sequence belongs to the transferase hexapeptide repeat family.

The protein operates within amine and polyamine metabolism; carnitine metabolism. Its function is as follows. Overproduction of CaiE stimulates the activity of CaiB and CaiD. In Escherichia coli O157:H7, this protein is Carnitine operon protein CaiE.